Reading from the N-terminus, the 518-residue chain is Bifunctional purine biosynthesis protein PurH (518 aa).

Residues 1-146 (MSPIALLSVS…KNHQDVLVVT (146 aa)) enclose the MGS-like domain.

This sequence belongs to the PurH family.

It catalyses the reaction (6R)-10-formyltetrahydrofolate + 5-amino-1-(5-phospho-beta-D-ribosyl)imidazole-4-carboxamide = 5-formamido-1-(5-phospho-D-ribosyl)imidazole-4-carboxamide + (6S)-5,6,7,8-tetrahydrofolate. It carries out the reaction IMP + H2O = 5-formamido-1-(5-phospho-D-ribosyl)imidazole-4-carboxamide. The protein operates within purine metabolism; IMP biosynthesis via de novo pathway; 5-formamido-1-(5-phospho-D-ribosyl)imidazole-4-carboxamide from 5-amino-1-(5-phospho-D-ribosyl)imidazole-4-carboxamide (10-formyl THF route): step 1/1. Its pathway is purine metabolism; IMP biosynthesis via de novo pathway; IMP from 5-formamido-1-(5-phospho-D-ribosyl)imidazole-4-carboxamide: step 1/1. The sequence is that of Bifunctional purine biosynthesis protein PurH from Prochlorococcus marinus (strain NATL1A).